A 79-amino-acid chain; its full sequence is Reactive oxygen species modulator 1 (79 aa).

A helical membrane pass occupies residues 22–44; that stretch reads GFVMGCAVGMAAGALFGTFSCLR. The interval 42-60 is sufficient for antibacterial activity; it reads CLRIGMRGRELMGGIGKTM.

Belongs to the MGR2 family.

The protein localises to the mitochondrion inner membrane. In terms of biological role, has antibacterial activity against a variety of bacteria including S.aureus, P.aeruginosa and M.tuberculosis. Acts by inducing bacterial membrane breakage. Induces production of reactive oxygen species (ROS) which are necessary for cell proliferation. May play a role in inducing oxidative DNA damage and replicative senescence. May play a role in the coordination of mitochondrial morphology and cell proliferation. The chain is Reactive oxygen species modulator 1 (ROMO1) from Bos taurus (Bovine).